We begin with the raw amino-acid sequence, 247 residues long: MTIRVAVLGAAGRMGSTTAQAVRDAEGLELVAEVDAGDDVAALAGRADVAVDFTLPDVTEANVHALLDAGIHAVVGTTGWDDDALGRVSDHVGRTAGLGVLVAPNFSLSAVLAMRFAAQAAPYFASAEVVELHHPRKVDAPSGTAVHTARGIADARGAAGSPPMPDATETALPGARGAVVDGVRVHALRLEGLVAHEEILLSNPGELMTIRTDTFDRASFMPGVLLAVREIADHPGLTVGLDAYLDL.

Residues 9–14 (GAAGRM), 76–78 (GTT), and 103–106 (APNF) each bind NAD(+). The active-site Proton donor/acceptor is the H133. Residue H134 coordinates (S)-2,3,4,5-tetrahydrodipicolinate. K137 acts as the Proton donor in catalysis. Position 143–144 (143–144 (GT)) interacts with (S)-2,3,4,5-tetrahydrodipicolinate.

The protein belongs to the DapB family.

The protein resides in the cytoplasm. The catalysed reaction is (S)-2,3,4,5-tetrahydrodipicolinate + NAD(+) + H2O = (2S,4S)-4-hydroxy-2,3,4,5-tetrahydrodipicolinate + NADH + H(+). It carries out the reaction (S)-2,3,4,5-tetrahydrodipicolinate + NADP(+) + H2O = (2S,4S)-4-hydroxy-2,3,4,5-tetrahydrodipicolinate + NADPH + H(+). Its pathway is amino-acid biosynthesis; L-lysine biosynthesis via DAP pathway; (S)-tetrahydrodipicolinate from L-aspartate: step 4/4. In terms of biological role, catalyzes the conversion of 4-hydroxy-tetrahydrodipicolinate (HTPA) to tetrahydrodipicolinate. This chain is 4-hydroxy-tetrahydrodipicolinate reductase, found in Beutenbergia cavernae (strain ATCC BAA-8 / DSM 12333 / CCUG 43141 / JCM 11478 / NBRC 16432 / NCIMB 13614 / HKI 0122).